The chain runs to 432 residues: MKVNLDYLGRLFTENELTEEERQLAEKLPAMRKEKGKLFCQRCNSTILEEWYLPIGAYYCRECLLMKRVRSDQTLYYFPQEDFPKQDVLKWRGQLTPFQEKVSEGLLQAVDKQKPTLVHAVTGAGKTEMIYQVVAKVINAGGAVCLASPRIDVCLELYKRLQQDFSCGIALLHGESEPYFRTPLVVATTHQLLKFYQAFDLLIVDEVDAFPYVDNPMLYHAVKNSVKENGLRIFLTATSTNELDKKVRLGELKRLNLPRRFHGNPLIIPKPIWLSDFNRYLDKNRLSPKLKSYIEKQRKTAYPLLIFASEIKKGEQLAEILQEQFPNEKIGFVSSVTEDRLEQVQAFRDGELTILISTTILERGVTFPCVDVFVVEANHRLFTKSSLIQIGGRVGRSMDRPTGDLLFFHDGLNASIKKAIKEIQMMNKEAGL.

The Zn(2+) site is built by Cys-40, Cys-43, Cys-60, and Cys-63. The region spanning 107–257 (LQAVDKQKPT…RLGELKRLNL (151 aa)) is the Helicase ATP-binding domain. 120–127 (AVTGAGKT) is a binding site for ATP. The DEAD box signature appears at 205 to 208 (DEVD). A Helicase C-terminal domain is found at 289–432 (KLKSYIEKQR…IQMMNKEAGL (144 aa)).

Belongs to the DEAD box helicase family. Monomer and dimer in solution. Interacts with DprA and ComFC; ComFA-ComFC form rings about 150 Angstroms in diameter with apparent 6-fold symmetry. Zn(2+) serves as cofactor.

It is found in the cytoplasm. Its function is as follows. Involved in transformation (genetic competence for DNA uptake). DNA uptake is energy dependent, this protein may provide the driving force for DNA uptake. Does not have helicase activity, translocates on single-stranded (ss)DNA in a 5'-3' direction in an ATP-dependent manner, but does not unwind double-stranded (ds)DNA (tested with 5'- and 3'-overhang dsDNA). ATP hydrolysis causes the release of ssDNA from ComFA. A ssDNA-stimulated ATPase; dsDNA does not stimulate ATPase. ATP hydrolysis causes the release of ssDNA from ComFA. ComFC has no effect on ATPase activity. Binds ssDNA but only very poorly to dsDNA in the absence of ATP. Binding to ssDNA does not require free DNA ends. This chain is Competence protein ComFA, found in Streptococcus pneumoniae (strain ATCC BAA-255 / R6).